The chain runs to 127 residues: Profilin (127 aa).

The protein belongs to the profilin family. As to quaternary structure, occurs in many kinds of cells as a complex with monomeric actin in a 1:1 ratio.

Its subcellular location is the cytoplasm. It is found in the cytoskeleton. Binds to actin and affects the structure of the cytoskeleton. At high concentrations, profilin prevents the polymerization of actin, whereas it enhances it at low concentrations. By binding to PIP2, it inhibits the formation of IP3 and DG. In S.pombe, it is essential for cytokinesis. This is Profilin (cdc3) from Schizosaccharomyces pombe (strain 972 / ATCC 24843) (Fission yeast).